We begin with the raw amino-acid sequence, 485 residues long: Pup--protein ligase (485 aa).

Residue E33 participates in Mg(2+) binding. R76 is a binding site for ATP. Y78 is a Mg(2+) binding site. D80 functions as the Proton acceptor in the catalytic mechanism. E86 is a binding site for Mg(2+). The ATP site is built by T89 and W451.

The protein belongs to the Pup ligase/Pup deamidase family. Pup-conjugating enzyme subfamily.

It catalyses the reaction ATP + [prokaryotic ubiquitin-like protein]-L-glutamate + [protein]-L-lysine = ADP + phosphate + N(6)-([prokaryotic ubiquitin-like protein]-gamma-L-glutamyl)-[protein]-L-lysine.. Its pathway is protein degradation; proteasomal Pup-dependent pathway. It participates in protein modification; protein pupylation. Catalyzes the covalent attachment of the prokaryotic ubiquitin-like protein modifier Pup to the proteasomal substrate proteins, thereby targeting them for proteasomal degradation. This tagging system is termed pupylation. The ligation reaction involves the side-chain carboxylate of the C-terminal glutamate of Pup and the side-chain amino group of a substrate lysine. The sequence is that of Pup--protein ligase from Bifidobacterium longum subsp. infantis (strain ATCC 15697 / DSM 20088 / JCM 1222 / NCTC 11817 / S12).